The following is a 248-amino-acid chain: Small ribosomal subunit protein uS3 (248 aa).

The region spanning 38 to 106 is the KH type-2 domain; sequence VREYLVKTLD…QVALNILEVK (69 aa). A compositionally biased stretch (basic and acidic residues) spans 213-230; sequence ESEINAPAERRGRGDRNG. The interval 213–248 is disordered; it reads ESEINAPAERRGRGDRNGRPRRGGQRRQRSEQKQEG.

This sequence belongs to the universal ribosomal protein uS3 family. As to quaternary structure, part of the 30S ribosomal subunit. Forms a tight complex with proteins S10 and S14.

Its function is as follows. Binds the lower part of the 30S subunit head. Binds mRNA in the 70S ribosome, positioning it for translation. The sequence is that of Small ribosomal subunit protein uS3 from Corynebacterium diphtheriae (strain ATCC 700971 / NCTC 13129 / Biotype gravis).